A 201-amino-acid chain; its full sequence is Ribonuclease HII (201 aa).

One can recognise an RNase H type-2 domain in the interval 12–201; that stretch reads DLVAGVDEVG…VRELLDVSVQ (190 aa). Positions 18, 19, and 110 each coordinate a divalent metal cation.

It belongs to the RNase HII family. Mn(2+) serves as cofactor. Mg(2+) is required as a cofactor.

The protein resides in the cytoplasm. It carries out the reaction Endonucleolytic cleavage to 5'-phosphomonoester.. Endonuclease that specifically degrades the RNA of RNA-DNA hybrids. This Pseudomonas aeruginosa (strain ATCC 15692 / DSM 22644 / CIP 104116 / JCM 14847 / LMG 12228 / 1C / PRS 101 / PAO1) protein is Ribonuclease HII.